The sequence spans 325 residues: tRNA dimethylallyltransferase (325 aa).

An ATP-binding site is contributed by 25-32; that stretch reads GNTGSGKS. 27–32 provides a ligand contact to substrate; the sequence is TGSGKS. Residues 50–53 form an interaction with substrate tRNA region; it reads DSRQ.

It belongs to the IPP transferase family. As to quaternary structure, monomer. Requires Mg(2+) as cofactor.

It catalyses the reaction adenosine(37) in tRNA + dimethylallyl diphosphate = N(6)-dimethylallyladenosine(37) in tRNA + diphosphate. In terms of biological role, catalyzes the transfer of a dimethylallyl group onto the adenine at position 37 in tRNAs that read codons beginning with uridine, leading to the formation of N6-(dimethylallyl)adenosine (i(6)A). This chain is tRNA dimethylallyltransferase, found in Dehalococcoides mccartyi (strain ATCC BAA-2266 / KCTC 15142 / 195) (Dehalococcoides ethenogenes (strain 195)).